The following is a 424-amino-acid chain: Sulfate adenylyltransferase (424 aa).

It belongs to the sulfate adenylyltransferase family.

The enzyme catalyses sulfate + ATP + H(+) = adenosine 5'-phosphosulfate + diphosphate. The protein operates within sulfur metabolism; hydrogen sulfide biosynthesis; sulfite from sulfate: step 1/3. The protein is Sulfate adenylyltransferase of Desulfatibacillum aliphaticivorans.